A 357-amino-acid polypeptide reads, in one-letter code: 2-oxoglutarate-dependent dioxygenase 11 (357 aa).

The Fe2OG dioxygenase domain maps to 207–307 (QPRGLRMAYY…RISAALFHYP (101 aa)). The Fe cation site is built by histidine 231, aspartate 233, and histidine 288. Arginine 298 provides a ligand contact to 2-oxoglutarate.

This sequence belongs to the iron/ascorbate-dependent oxidoreductase family. Requires Fe(2+) as cofactor. L-ascorbate is required as a cofactor. As to expression, expressed in shoots.

The protein resides in the cytoplasm. The catalysed reaction is melatonin + 2-oxoglutarate + O2 = 2-hydroxymelatonin + succinate + CO2. Functionally, involved in melatonin degradation. Catalyzes the hydroxylation of melatonin to produce 2-hydroxymelatonin. The polypeptide is 2-oxoglutarate-dependent dioxygenase 11 (Oryza sativa subsp. japonica (Rice)).